The chain runs to 687 residues: MKKADAPARARELRDRIRAADHAYYVLDQPLLADAEYDRLMHELQALEADHPELVTADSPTQRVSGAPSERFERVVHREPMLSLGNVQSDDELQEFDARVRRLLGLPDGEPVGYVVEPKLDGLAVELVYRDGAFTSGSTRGDGVNGEDVTANLRVVGGLGANRGVPHALEGRPPPRVEVRGEVLLFKEHFEAMNRQLVRAGEAPFANPRNAAAGTLRQLDWRVTARRPLSFIAYEALLPGDDPWRTHWEKLEELAAWGFETNAENRRCRGLAEVLAYRDRMAERRFELPYDTDGIVVKVDDLDWRRRLGAASKFPRWAVAFKYPPQEEATRIRRIWASVGRTGVLTPVVDFDPVRLSGAMVARATLHNEDEMRRKDILEGDWVLVRRAGEVIPEVVKPLPERRTGAEQPFRFPAECPVCGARVVREEGEKVYRCTGAACPAQLVGRLCHFAQRRALDIEGLGEKLAAGLVERGQVKDFADLYAVPFEVWQQLFSRPRKEQDAGAARELPEKSAQNMVAALERSRKTTLRRFLFALGIPQVGEATAATLARHFGGLARVMDADEEALKGVRDVGPETAAEIRAWTQEPQNRRVVERLLAAGVTPEAEVVEARGPFAGKTVVLTGGLSTMSRDDAKAEIERRGGRVSGSVSRKTDLVVAGEDAGSKLEKARSLGVRIAGEEEFVRLLKE.

Residues 34–38 (DAEYD), 83–84 (SL), and Glu-117 each bind NAD(+). Lys-119 acts as the N6-AMP-lysine intermediate in catalysis. Residues Arg-140, Glu-182, Lys-298, and Lys-322 each coordinate NAD(+). Cys-416, Cys-419, Cys-434, and Cys-439 together coordinate Zn(2+). In terms of domain architecture, BRCT spans 609-687 (EARGPFAGKT…EEEFVRLLKE (79 aa)).

Belongs to the NAD-dependent DNA ligase family. LigA subfamily. It depends on Mg(2+) as a cofactor. Mn(2+) serves as cofactor.

The enzyme catalyses NAD(+) + (deoxyribonucleotide)n-3'-hydroxyl + 5'-phospho-(deoxyribonucleotide)m = (deoxyribonucleotide)n+m + AMP + beta-nicotinamide D-nucleotide.. Its function is as follows. DNA ligase that catalyzes the formation of phosphodiester linkages between 5'-phosphoryl and 3'-hydroxyl groups in double-stranded DNA using NAD as a coenzyme and as the energy source for the reaction. It is essential for DNA replication and repair of damaged DNA. The sequence is that of DNA ligase from Anaeromyxobacter sp. (strain K).